A 276-amino-acid polypeptide reads, in one-letter code: Large ribosomal subunit protein uL2 (276 aa).

The tract at residues 210 to 276 is disordered; that stretch reads GRNRHRGIRP…KLIISRRKGK (67 aa). Positions 230–240 are enriched in basic and acidic residues; sequence DHPHGGGEGKK. The span at 255 to 276 shows a compositional bias: basic residues; it reads KGAKTRRKKASDKLIISRRKGK.

Belongs to the universal ribosomal protein uL2 family. As to quaternary structure, part of the 50S ribosomal subunit. Forms a bridge to the 30S subunit in the 70S ribosome.

Functionally, one of the primary rRNA binding proteins. Required for association of the 30S and 50S subunits to form the 70S ribosome, for tRNA binding and peptide bond formation. It has been suggested to have peptidyltransferase activity; this is somewhat controversial. Makes several contacts with the 16S rRNA in the 70S ribosome. This is Large ribosomal subunit protein uL2 from Campylobacter jejuni subsp. jejuni serotype O:6 (strain 81116 / NCTC 11828).